The chain runs to 100 residues: uncharacterized protein (100 aa).

The protein localises to the mitochondrion. This is an uncharacterized protein from Arabidopsis thaliana (Mouse-ear cress).